The primary structure comprises 107 residues: uncharacterized protein (107 aa).

Residues 34–107 are a coiled coil; sequence FASKDKKDEK…SDNQKKDMSY (74 aa).

This is an uncharacterized protein from Dictyostelium discoideum (Social amoeba).